The sequence spans 433 residues: Oxaloacetate decarboxylase beta chain 2 (433 aa).

The next 10 membrane-spanning stretches (helical) occupy residues 16-36 (LGAGQAIMLLVSLLLLWLAIA), 42-62 (LLLLPIGFGGLLSNIPEAGMA), 122-142 (VLALFYKVAIGSGVAPLVIFM), 168-188 (FGIFATVLGALTLNYFGLIAF), 190-210 (LPQAAAIGIIGGADGPTAIYL), 216-236 (PELLGAIAVAAYSYMALVPLI), 266-286 (ILFPVVLLLLVALLLPDAAPL), 311-331 (NGLINIVTIFLGLSVGAKLVA), 340-360 (LGILLLGVIAFGIGTAAGVLM), and 413-433 (VAGVIGSAIAAGVMLKYVLAM).

The protein belongs to the GcdB/MmdB/OadB family. As to quaternary structure, heterotrimer of an alpha, a beta and a gamma subunit. The cofactor is Na(+).

The protein resides in the cell membrane. The enzyme catalyses oxaloacetate + 2 Na(+)(in) + H(+) = pyruvate + 2 Na(+)(out) + CO2. Its function is as follows. Catalyzes the decarboxylation of oxaloacetate coupled to Na(+) translocation. This Salmonella typhi protein is Oxaloacetate decarboxylase beta chain 2 (oadB2).